Here is a 289-residue protein sequence, read N- to C-terminus: Phosphatidylserine decarboxylase proenzyme (289 aa).

Residues Asp89, His146, and Ser252 each act as charge relay system; for autoendoproteolytic cleavage activity in the active site. The Schiff-base intermediate with substrate; via pyruvic acid; for decarboxylase activity role is filled by Ser252. Ser252 is subject to Pyruvic acid (Ser); by autocatalysis.

This sequence belongs to the phosphatidylserine decarboxylase family. PSD-B subfamily. Prokaryotic type I sub-subfamily. As to quaternary structure, heterodimer of a large membrane-associated beta subunit and a small pyruvoyl-containing alpha subunit. Requires pyruvate as cofactor. Is synthesized initially as an inactive proenzyme. Formation of the active enzyme involves a self-maturation process in which the active site pyruvoyl group is generated from an internal serine residue via an autocatalytic post-translational modification. Two non-identical subunits are generated from the proenzyme in this reaction, and the pyruvate is formed at the N-terminus of the alpha chain, which is derived from the carboxyl end of the proenzyme. The autoendoproteolytic cleavage occurs by a canonical serine protease mechanism, in which the side chain hydroxyl group of the serine supplies its oxygen atom to form the C-terminus of the beta chain, while the remainder of the serine residue undergoes an oxidative deamination to produce ammonia and the pyruvoyl prosthetic group on the alpha chain. During this reaction, the Ser that is part of the protease active site of the proenzyme becomes the pyruvoyl prosthetic group, which constitutes an essential element of the active site of the mature decarboxylase.

Its subcellular location is the cell membrane. It carries out the reaction a 1,2-diacyl-sn-glycero-3-phospho-L-serine + H(+) = a 1,2-diacyl-sn-glycero-3-phosphoethanolamine + CO2. It functions in the pathway phospholipid metabolism; phosphatidylethanolamine biosynthesis; phosphatidylethanolamine from CDP-diacylglycerol: step 2/2. Functionally, catalyzes the formation of phosphatidylethanolamine (PtdEtn) from phosphatidylserine (PtdSer). In Nitrosospira multiformis (strain ATCC 25196 / NCIMB 11849 / C 71), this protein is Phosphatidylserine decarboxylase proenzyme.